The chain runs to 382 residues: Rubredoxin-NAD(+) reductase (382 aa).

Residues 9-12 (TGLA), 33-34 (TA), lysine 42, valine 80, glutamate 156, aspartate 275, valine 287, and lysine 318 each bind FAD.

This sequence belongs to the FAD-dependent oxidoreductase family. In terms of assembly, homodimer. The cofactor is FAD.

The protein localises to the cytoplasm. It catalyses the reaction 2 reduced [rubredoxin] + NAD(+) + H(+) = 2 oxidized [rubredoxin] + NADH. It functions in the pathway hydrocarbon metabolism; alkane degradation. In terms of biological role, involved in the hydrocarbon hydroxylating system, which transfers electrons from NADH to rubredoxin reductase and then through rubredoxin to alkane 1 monooxygenase. This chain is Rubredoxin-NAD(+) reductase (rubB), found in Alcanivorax borkumensis (strain ATCC 700651 / DSM 11573 / NCIMB 13689 / SK2).